A 1312-amino-acid chain; its full sequence is Tetratricopeptide repeat protein 21B (1312 aa).

TPR repeat units lie at residues 4 to 38 (TDHYITAGIIYYCQEKYHQHVQNLAREGLKKYSND), 110 to 143 (PKALYYAGMFLWLMGRTDKAREYIDRMLKISNRS), 147 to 180 (LVLRGWLDLSSEKESTVNKSIRYFEEGIQDNKDI), 182 to 213 (ALIGKAQYFMAHQNYSGALDVINQIIVNYPPF), 214 to 247 (LPALTLKMRLFLAQQDWDQTLETAQRILLKDGAN), and 325 to 358 (AEVATALANNFILQGNVTEAAGWYATAMKLDGNH). Residues 365-392 (VIQCQILQGQLEEAEQQLDFLHEIQESI) are a coiled coil. TPR repeat units lie at residues 493–526 (TEPLYYTAQIKYLAGNLEGAQGSLQRCIEVDTAC), 528–560 (DFHLLMAQIHYAQGKFAECSVSLETGVSHNFKV), 564–597 (PLYHLIRARVLRKTGELQEAIKTLKMTMSLQEMK), 615–648 (VSIYLELAELLRLNGEQHEATKIIQDAINEFGGT), 720–753 (PHTSVLLGDALMNIQEPEKALEVYNEALHKNPQD), 755–787 (SLANRIGQALIKTHQYKKAVNYYEAAQKISGQD), 789–820 (LCCDLAELLIKLKQYSKAEAVLKQALAHEPVS), 829–861 (AKCLGLLGTTYQNYKKEESADILNKALELQQRI), 881–914 (SEICVQLAEHYVDQRNYEQAANYYKEAMVYSQDS), 916–947 (VKLQLSRLYLMMGDLDSCENHCSALLENHSFK), 948–981 (EEAAMMMADVMFRKQDYTKSIELFDQILEENPDN), 983–1015 (AVLSKLIDLLRRSGNLSKAPMFFEKALANSSRT), 1019–1052 (PGYNYCKGLYCWYLGQPNDGLKYFNKARKDSEWG), 1193–1226 (EKSWLLLADVYIKLGKYDIATELLKRCLLYNKSC), 1228–1260 (KAYEYLGFIMENEQSYKDAAANYRLAWDYSNQS), and 1262–1295 (PAVGFRLAFNYLKDKKYVDAIDICHKVLKAHPTY).

Belongs to the TTC21 family. Component of the IFT complex A (IFT-A).

Functionally, component of the IFT complex A (IFT-A), a complex required for retrograde ciliary transport and entry into cilia of G protein-coupled receptors (GPCRs). Negatively modulates the SHH signal transduction. The protein is Tetratricopeptide repeat protein 21B (ttc21b) of Xenopus laevis (African clawed frog).